The primary structure comprises 378 residues: UPF0754 membrane protein BALH_0780 (378 aa).

2 helical membrane-spanning segments follow: residues 1–21 (MNIW…GGFT) and 357–377 (YLGA…LLFL).

The protein belongs to the UPF0754 family.

Its subcellular location is the cell membrane. This chain is UPF0754 membrane protein BALH_0780, found in Bacillus thuringiensis (strain Al Hakam).